A 220-amino-acid polypeptide reads, in one-letter code: Splicing factor U2AF 26 kDa subunit (220 aa).

N-acetylalanine is present on alanine 2. The C3H1-type 1 zinc-finger motif lies at 12–40; sequence EKDKVNCSFYFKIGVCRHGDRCSRLHNKP. The RRM domain occupies 65–147; sequence SHCHVSDVEV…QAVHGELSPV (83 aa). The segment at 149-176 adopts a C3H1-type 2 zinc-finger fold; it reads DFRESCCRQYEMGECTRGGFCNFMHLRP. Positions 185–220 are disordered; it reads LYGRGPRRRSPPRFHTGHHPRERNHRCSPDHWHGRF. A compositionally biased stretch (basic residues) spans 189 to 208; it reads GPRRRSPPRFHTGHHPRERN. A compositionally biased stretch (basic and acidic residues) spans 209 to 220; sequence HRCSPDHWHGRF.

The protein belongs to the splicing factor SR family. As to quaternary structure, interacts with GFI1, U2AF2 and C1QBP. Isoform 2 is widely expressed. Isoform 3 is highly expressed in heart, brain and lung, lower expressed in thymus and much lower expressed in peripheral blood leukocytes.

The protein localises to the nucleus. Its subcellular location is the nucleus speckle. It localises to the cytoplasm. RNA-binding protein that function as a pre-mRNA splicing factor. Plays a critical role in both constitutive and enhancer-dependent splicing by mediating protein-protein interactions and protein-RNA interactions required for accurate 3'-splice site selection. Acts by enhancing the binding of U2AF2 to weak pyrimidine tracts. Also participates in the regulation of alternative pre-mRNA splicing. Activates exon 5 skipping of PTPRC during T-cell activation; an event reversed by GFI1. Binds to RNA at the AG dinucleotide at the 3'-splice site. Shows a preference for AGC or AGA. In Homo sapiens (Human), this protein is Splicing factor U2AF 26 kDa subunit (U2AF1L4).